The chain runs to 147 residues: Small ribosomal subunit protein uS12 (147 aa).

It belongs to the universal ribosomal protein uS12 family. Part of the 30S ribosomal subunit.

With S4 and S5 plays an important role in translational accuracy. Located at the interface of the 30S and 50S subunits. The polypeptide is Small ribosomal subunit protein uS12 (Pyrobaculum islandicum (strain DSM 4184 / JCM 9189 / GEO3)).